A 461-amino-acid polypeptide reads, in one-letter code: FAD-dependent monooxygenase nodY2 (461 aa).

FAD-binding residues include glutamate 48 and arginine 136. Arginine 214 is an active-site residue. Residues aspartate 338 and glycine 351 each coordinate FAD.

Belongs to the paxM FAD-dependent monooxygenase family. FAD is required as a cofactor.

It functions in the pathway secondary metabolite biosynthesis. Functionally, FAD-dependent monooxygenase; part of the gene cluster that mediates the biosynthesis of the indole diterpenes nodulisporic acids (NA). Nodulisporic acid A (NAA) and its chemically modified derivatives are of particular significance because of their highly potent insecticidal activity against blood-feeding arthropods and lack of observable adverse effects on mammals, in particular the tremogenicity associated with the paspaline-derived IDTs is not observed. The geranylgeranyl diphosphate (GGPP) synthase ggs1, localized outside of the cluster, is proposed to catalyze the first step in nodulisporic acid biosynthesis via conversion of farnesyl pyrophosphate and isopentyl pyrophosphate into geranylgeranyl pyrophosphate (GGPP). Condensation of indole-3-glycerol phosphate with GGPP by the prenyl transferase nodC then forms 3-geranylgeranylindole (3-GGI). Epoxidation by the FAD-dependent monooxygenase nodM leads to a single-epoxidized-GGI that is substrate of the terpene cyclase nodB for cyclization to yield emindole SB. The terminal methyl carbon, C28, of emindole SB is then oxidized by the cytochrome P450 monooxygenase nodW to produce nodulisporic acid F (NAF), the pentacyclic core of NAA. NAF is converted to nodulisporic acid E (NAE) via prenylation. This step is probably performed by one of the indole diterpene prenyltransferases nodD1 or nodD2. Several oxidation steps performed by the FAD-linked oxidoreductase nodO and one of the cytochrome P450 monooxygenase nodR, nodX or nodZ further convert NAE to nodulisporic acid D (NAD). NAD is substrate of cytochrome P450 monooxygenase nodJ to produce the precursor of nodulisporic acid C (NAC), converted to NAC by one of the indole diterpene prenyltransferases nodD1 or nodD2. The FAD-dependent monooxygenase nodY2 then oxidizes NAC to nodulisporic acid B (NAB). Finally NAB is converted to NAA by one of the cytochrome P450 monooxygenases nodR, nodX or nodZ. In Hypoxylon pulicicidum, this protein is FAD-dependent monooxygenase nodY2.